The sequence spans 359 residues: Queuine tRNA-ribosyltransferase (359 aa).

Asp-92 serves as the catalytic Proton acceptor. Residues 92-96 (DSGGF), Asp-146, Gln-189, and Gly-216 each bind substrate. The RNA binding stretch occupies residues 245–251 (GVGKPAD). Asp-264 functions as the Nucleophile in the catalytic mechanism. Residues 269–273 (TRSGR) form an RNA binding; important for wobble base 34 recognition region. Zn(2+)-binding residues include Cys-302, Cys-304, Cys-307, and His-333.

This sequence belongs to the queuine tRNA-ribosyltransferase family. In terms of assembly, homodimer. Within each dimer, one monomer is responsible for RNA recognition and catalysis, while the other monomer binds to the replacement base PreQ1. The cofactor is Zn(2+).

It catalyses the reaction 7-aminomethyl-7-carbaguanine + guanosine(34) in tRNA = 7-aminomethyl-7-carbaguanosine(34) in tRNA + guanine. Its pathway is tRNA modification; tRNA-queuosine biosynthesis. Catalyzes the base-exchange of a guanine (G) residue with the queuine precursor 7-aminomethyl-7-deazaguanine (PreQ1) at position 34 (anticodon wobble position) in tRNAs with GU(N) anticodons (tRNA-Asp, -Asn, -His and -Tyr). Catalysis occurs through a double-displacement mechanism. The nucleophile active site attacks the C1' of nucleotide 34 to detach the guanine base from the RNA, forming a covalent enzyme-RNA intermediate. The proton acceptor active site deprotonates the incoming PreQ1, allowing a nucleophilic attack on the C1' of the ribose to form the product. After dissociation, two additional enzymatic reactions on the tRNA convert PreQ1 to queuine (Q), resulting in the hypermodified nucleoside queuosine (7-(((4,5-cis-dihydroxy-2-cyclopenten-1-yl)amino)methyl)-7-deazaguanosine). The chain is Queuine tRNA-ribosyltransferase from Rickettsia bellii (strain RML369-C).